Here is a 182-residue protein sequence, read N- to C-terminus: Flagellar transcriptional regulator FlhC (182 aa).

4 residues coordinate Zn(2+): Cys-138, Cys-141, Cys-158, and Cys-161.

Belongs to the FlhC family. As to quaternary structure, heterohexamer composed of two FlhC and four FlhD subunits. Each FlhC binds a FlhD dimer, forming a heterotrimer, and a hexamer assembles by dimerization of two heterotrimers. Requires Zn(2+) as cofactor.

It is found in the cytoplasm. Functions in complex with FlhD as a master transcriptional regulator that regulates transcription of several flagellar and non-flagellar operons by binding to their promoter region. Activates expression of class 2 flagellar genes, including fliA, which is a flagellum-specific sigma factor that turns on the class 3 genes. Also regulates genes whose products function in a variety of physiological pathways. The polypeptide is Flagellar transcriptional regulator FlhC (Gallionella capsiferriformans (strain ES-2) (Gallionella ferruginea capsiferriformans (strain ES-2))).